A 353-amino-acid polypeptide reads, in one-letter code: Uroporphyrinogen decarboxylase (353 aa).

Substrate is bound by residues 28–32 (RQAGR), D78, Y155, S210, and H325.

It belongs to the uroporphyrinogen decarboxylase family. Homodimer.

It localises to the cytoplasm. The catalysed reaction is uroporphyrinogen III + 4 H(+) = coproporphyrinogen III + 4 CO2. It functions in the pathway porphyrin-containing compound metabolism; protoporphyrin-IX biosynthesis; coproporphyrinogen-III from 5-aminolevulinate: step 4/4. In terms of biological role, catalyzes the decarboxylation of four acetate groups of uroporphyrinogen-III to yield coproporphyrinogen-III. The protein is Uroporphyrinogen decarboxylase of Nostoc punctiforme (strain ATCC 29133 / PCC 73102).